We begin with the raw amino-acid sequence, 225 residues long: Endoglucanase (225 aa).

Residues 1–15 (MKVFVVLAAIVAIAN) form the signal peptide. The Nucleophile role is filled by Asp-29. 7 disulfides stabilise this stretch: Cys-30–Cys-152, Cys-31–Cys-66, Cys-35–Cys-103, Cys-50–Cys-74, Cys-104–Cys-219, Cys-106–Cys-209, and Cys-176–Cys-187. Asn-55 is a glycosylation site (N-linked (GlcNAc...) asparagine). Asp-138 (proton donor) is an active-site residue.

The protein belongs to the glycosyl hydrolase 45 (cellulase K) family. N- and O-glycosylated. Contains hybrid- and complex-type N-glycans.

Its subcellular location is the secreted. It catalyses the reaction Endohydrolysis of (1-&gt;4)-beta-D-glucosidic linkages in cellulose, lichenin and cereal beta-D-glucans.. Activity is not affected by metal ions except Mn(2+), which reduces the activity by 40-50%. However, no significant change in activity in response to 1 mM EDTA. In terms of biological role, hydrolyzes carboxymethylcellulose (CMC). Also hydrolyzes lichenan and barley beta-1,4-D-glucan. CMC is hydrolyzed majorily to cellobiose (G2), cellotriose (G3) and cellotetraose (G4). Cellohexaose (G6) is hydrolyzed to G4 and G2 with traces of G3. Cellopentaose (G5) is completely hydrolyzed to G2 and G3, and G4 is partially hydrolyzed to G2. Does not hydrolyze G2 or G3. Does not hydrolyze crystalline cellulose, soluble starch, xylan, mannan or laminarin. This is Endoglucanase from Cryptopygus antarcticus (Antarctic springtail).